The following is a 156-amino-acid chain: ATP synthase subunit b (156 aa).

Residues 7–29 (LLGQAISFAMFVWFCMKYVWPPI) form a helical membrane-spanning segment.

It belongs to the ATPase B chain family. F-type ATPases have 2 components, F(1) - the catalytic core - and F(0) - the membrane proton channel. F(1) has five subunits: alpha(3), beta(3), gamma(1), delta(1), epsilon(1). F(0) has three main subunits: a(1), b(2) and c(10-14). The alpha and beta chains form an alternating ring which encloses part of the gamma chain. F(1) is attached to F(0) by a central stalk formed by the gamma and epsilon chains, while a peripheral stalk is formed by the delta and b chains.

It is found in the cell inner membrane. F(1)F(0) ATP synthase produces ATP from ADP in the presence of a proton or sodium gradient. F-type ATPases consist of two structural domains, F(1) containing the extramembraneous catalytic core and F(0) containing the membrane proton channel, linked together by a central stalk and a peripheral stalk. During catalysis, ATP synthesis in the catalytic domain of F(1) is coupled via a rotary mechanism of the central stalk subunits to proton translocation. Its function is as follows. Component of the F(0) channel, it forms part of the peripheral stalk, linking F(1) to F(0). This Vibrio vulnificus (strain CMCP6) protein is ATP synthase subunit b.